The primary structure comprises 146 residues: Holo-[acyl-carrier-protein] synthase (146 aa).

Aspartate 8 and glutamate 61 together coordinate Mg(2+).

This sequence belongs to the P-Pant transferase superfamily. AcpS family. Requires Mg(2+) as cofactor.

The protein localises to the cytoplasm. It carries out the reaction apo-[ACP] + CoA = holo-[ACP] + adenosine 3',5'-bisphosphate + H(+). In terms of biological role, transfers the 4'-phosphopantetheine moiety from coenzyme A to a Ser of acyl-carrier-protein. This chain is Holo-[acyl-carrier-protein] synthase, found in Rhodopseudomonas palustris (strain TIE-1).